We begin with the raw amino-acid sequence, 339 residues long: Phenylalanine--tRNA ligase alpha subunit (339 aa).

Glu-247 provides a ligand contact to Mg(2+).

It belongs to the class-II aminoacyl-tRNA synthetase family. Phe-tRNA synthetase alpha subunit type 1 subfamily. In terms of assembly, tetramer of two alpha and two beta subunits. Mg(2+) serves as cofactor.

It is found in the cytoplasm. It catalyses the reaction tRNA(Phe) + L-phenylalanine + ATP = L-phenylalanyl-tRNA(Phe) + AMP + diphosphate + H(+). This Deinococcus deserti (strain DSM 17065 / CIP 109153 / LMG 22923 / VCD115) protein is Phenylalanine--tRNA ligase alpha subunit.